A 442-amino-acid polypeptide reads, in one-letter code: 3-ketoacyl-CoA thiolase (442 aa).

The Acyl-thioester intermediate role is filled by C105. Active-site proton acceptor residues include H398 and C428.

The protein belongs to the thiolase-like superfamily. Thiolase family. Heterotetramer of two alpha chains (FadJ) and two beta chains (FadI).

The protein resides in the cytoplasm. It carries out the reaction an acyl-CoA + acetyl-CoA = a 3-oxoacyl-CoA + CoA. It participates in lipid metabolism; fatty acid beta-oxidation. Catalyzes the final step of fatty acid oxidation in which acetyl-CoA is released and the CoA ester of a fatty acid two carbons shorter is formed. The protein is 3-ketoacyl-CoA thiolase of Aliivibrio fischeri (strain ATCC 700601 / ES114) (Vibrio fischeri).